We begin with the raw amino-acid sequence, 214 residues long: Probable nicotinate-nucleotide adenylyltransferase (214 aa).

This sequence belongs to the NadD family.

It catalyses the reaction nicotinate beta-D-ribonucleotide + ATP + H(+) = deamido-NAD(+) + diphosphate. It participates in cofactor biosynthesis; NAD(+) biosynthesis; deamido-NAD(+) from nicotinate D-ribonucleotide: step 1/1. Functionally, catalyzes the reversible adenylation of nicotinate mononucleotide (NaMN) to nicotinic acid adenine dinucleotide (NaAD). The sequence is that of Probable nicotinate-nucleotide adenylyltransferase from Buchnera aphidicola subsp. Acyrthosiphon pisum (strain Tuc7).